Reading from the N-terminus, the 256-residue chain is Cytoplasmic envelopment protein 1 (256 aa).

It belongs to the herpesviridae cytoplasmic envelopment protein 1 family.

Its subcellular location is the virion. The protein resides in the virion tegument. The protein localises to the host cytoplasm. It is found in the host Golgi apparatus. Its function is as follows. Plays a critical role in cytoplasmic virus egress. Participates in the final step of tegumentation and envelope acquisition within the host cytoplasm. This chain is Cytoplasmic envelopment protein 1 (U75), found in Homo sapiens (Human).